A 189-amino-acid chain; its full sequence is Segregation and condensation protein B (189 aa).

Belongs to the ScpB family. As to quaternary structure, homodimer. Homodimerization may be required to stabilize the binding of ScpA to the Smc head domains. Component of a cohesin-like complex composed of ScpA, ScpB and the Smc homodimer, in which ScpA and ScpB bind to the head domain of Smc. The presence of the three proteins is required for the association of the complex with DNA.

Its subcellular location is the cytoplasm. Its function is as follows. Participates in chromosomal partition during cell division. May act via the formation of a condensin-like complex containing Smc and ScpA that pull DNA away from mid-cell into both cell halves. This is Segregation and condensation protein B from Streptococcus sanguinis (strain SK36).